Here is a 248-residue protein sequence, read N- to C-terminus: Small ribosomal subunit protein uS3 (248 aa).

The 69-residue stretch at 38-106 (IREYLEKGLD…MVALNILEVK (69 aa)) folds into the KH type-2 domain. The interval 214 to 248 (SELNAPAQGRGRGDRNGRPRRGGQRRQRAQQKQEG) is disordered. The span at 231–242 (RPRRGGQRRQRA) shows a compositional bias: basic residues.

Belongs to the universal ribosomal protein uS3 family. In terms of assembly, part of the 30S ribosomal subunit. Forms a tight complex with proteins S10 and S14.

In terms of biological role, binds the lower part of the 30S subunit head. Binds mRNA in the 70S ribosome, positioning it for translation. The protein is Small ribosomal subunit protein uS3 of Corynebacterium aurimucosum (strain ATCC 700975 / DSM 44827 / CIP 107346 / CN-1) (Corynebacterium nigricans).